Consider the following 623-residue polypeptide: Leucine aminopeptidase 2 (623 aa).

A peptide contacts are provided by residues 140-142 (QLE) and 266-271 (PYGGME). Position 295 (H295) interacts with Zn(2+). Catalysis depends on E296, which acts as the Proton acceptor. H299 and E318 together coordinate Zn(2+). Y382 (proton donor) is an active-site residue.

The protein belongs to the peptidase M1 family. The cofactor is Zn(2+).

It localises to the cytoplasm. It is found in the nucleus. It carries out the reaction an epoxide + H2O = an ethanediol. Functionally, aminopeptidase that preferentially cleaves di- and tripeptides. Also has low epoxide hydrolase activity (in vitro). Can hydrolyze the epoxide leukotriene LTA(4) but it forms preferentially 5,6-dihydroxy-7,9,11,14-eicosatetraenoic acid rather than the cytokine leukotriene B(4) as the product compared to the homologous mammalian enzyme (in vitro). In Eremothecium gossypii (strain ATCC 10895 / CBS 109.51 / FGSC 9923 / NRRL Y-1056) (Yeast), this protein is Leucine aminopeptidase 2.